The sequence spans 321 residues: Iron(3+)-hydroxamate-binding protein YxeB (321 aa).

The first 20 residues, 1–20 (MKKNILLVGMLVLLLMFVSA), serve as a signal peptide directing secretion. Cys-21 is lipidated: N-palmitoyl cysteine. The S-diacylglycerol cysteine moiety is linked to residue Cys-21. Low complexity predominate over residues 24 to 33 (TASKGSSSDS). Residues 24–48 (TASKGSSSDSASEKTEMRTYKSPKG) form a disordered region. Residues 58-316 (RIVTDFYAGE…IITDMLIKRA (259 aa)) form the Fe/B12 periplasmic-binding domain.

The protein belongs to the bacterial solute-binding protein 8 family. The complex is composed of an ATP-binding protein (FhuC), two transmembrane proteins (FhuB and FhuG) and a solute-binding protein (FhuD or YxeB).

It is found in the cell membrane. Its subcellular location is the membrane raft. Part of the ABC transporter complex FhuCBGD involved in iron(3+)-hydroxamate import. Binds the iron(3+)-hydroxamate complex and transfers it to the membrane-bound permease. Partially required for the transport of desferrioxamine. This Bacillus subtilis (strain 168) protein is Iron(3+)-hydroxamate-binding protein YxeB (yxeB).